The chain runs to 141 residues: Putative phosphatidylglycerol/phosphatidylinositol transfer protein DDB_G0278295 (141 aa).

Residues 1 to 19 (MRLLLALFFVLALVSPSFT) form the signal peptide. N-linked (GlcNAc...) asparagine glycosylation is found at asparagine 82 and asparagine 104.

Belongs to the NPC2 family. Monomer.

Catalyzes the intermembrane transfer of phosphatidylglycerol and phosphatidylinositol. The chain is Putative phosphatidylglycerol/phosphatidylinositol transfer protein DDB_G0278295 from Dictyostelium discoideum (Social amoeba).